We begin with the raw amino-acid sequence, 74 residues long: Large ribosomal subunit protein bL31 (74 aa).

Positions 16, 18, 38, and 41 each coordinate Zn(2+).

It belongs to the bacterial ribosomal protein bL31 family. Type A subfamily. Part of the 50S ribosomal subunit. Zn(2+) is required as a cofactor.

Binds the 23S rRNA. In Mycobacteroides abscessus (strain ATCC 19977 / DSM 44196 / CCUG 20993 / CIP 104536 / JCM 13569 / NCTC 13031 / TMC 1543 / L948) (Mycobacterium abscessus), this protein is Large ribosomal subunit protein bL31.